A 113-amino-acid chain; its full sequence is U11-theraphotoxin-Hhn1k (113 aa).

A signal peptide spans 1–21 (MNTVRVTFLLVFVLAVSLGQA). Residues 22-74 (DKDENRMEMQEKTEQGKSYLDFAENLLLQKLEELEAKLLEEDSEESRNSRQKR) constitute a propeptide that is removed on maturation. A disordered region spans residues 61–83 (EEDSEESRNSRQKRCIGEGVPCD). Cystine bridges form between Cys75–Cys90, Cys82–Cys95, and Cys89–Cys110.

This sequence belongs to the neurotoxin 14 (magi-1) family. 01 (HNTX-16) subfamily. As to expression, expressed by the venom gland.

The protein localises to the secreted. Probable ion channel inhibitor. This chain is U11-theraphotoxin-Hhn1k, found in Cyriopagopus hainanus (Chinese bird spider).